The primary structure comprises 545 residues: Hydroxylamine reductase (545 aa).

[4Fe-4S] cluster is bound by residues Cys-3, Cys-6, Cys-15, and Cys-21. Hybrid [4Fe-2O-2S] cluster is bound by residues His-240, Glu-264, Cys-309, Cys-401, Cys-429, Cys-454, Glu-488, and Lys-490. Cys-401 is subject to Cysteine persulfide.

This sequence belongs to the HCP family. [4Fe-4S] cluster is required as a cofactor. Hybrid [4Fe-2O-2S] cluster serves as cofactor.

The protein resides in the cytoplasm. It catalyses the reaction A + NH4(+) + H2O = hydroxylamine + AH2 + H(+). In terms of biological role, catalyzes the reduction of hydroxylamine to form NH(3) and H(2)O. The chain is Hydroxylamine reductase from Rippkaea orientalis (strain PCC 8801 / RF-1) (Cyanothece sp. (strain PCC 8801)).